We begin with the raw amino-acid sequence, 491 residues long: Monodehydroascorbate reductase 5, chlorplastic (491 aa).

Residues 1 to 42 (MASTAAAASSQGCISWALRQRGLGGGGARAVPVLPRRRFCVS) constitute a chloroplast transit peptide. FAD is bound by residues 61-64 (GGNA), Glu-88, Arg-95, Lys-100, and 194-195 (RD). Residues 217 to 223 (GGYIGME), Glu-241, Arg-247, and Gly-306 contribute to the NAD(+) site. 219–223 (YIGME) contributes to the NADP(+) binding site. 2 residues coordinate NADP(+): Arg-247 and Gly-306. Asp-344 contributes to the FAD binding site. Residue 360–361 (EH) coordinates NAD(+). 360 to 361 (EH) is a binding site for NADP(+). An FAD-binding site is contributed by Val-362. Arg-366 lines the L-ascorbate pocket. Tyr-391 is an FAD binding site. NAD(+) is bound at residue Tyr-391. Residue Tyr-391 participates in NADP(+) binding. Arg-393 contacts L-ascorbate.

This sequence belongs to the FAD-dependent oxidoreductase family. FAD serves as cofactor.

The protein localises to the plastid. Its subcellular location is the chloroplast. It carries out the reaction 2 monodehydro-L-ascorbate radical + NADH + H(+) = 2 L-ascorbate + NAD(+). Its function is as follows. Catalyzes the conversion of monodehydroascorbate to ascorbate, oxidizing NADH in the process. Ascorbate is a major antioxidant against reactive oxygen species (ROS) and nitric oxide (NO). In Oryza sativa subsp. japonica (Rice), this protein is Monodehydroascorbate reductase 5, chlorplastic.